A 151-amino-acid polypeptide reads, in one-letter code: MTESSFKLAIVVSQFNRAVTEKLLNGVLQRLTELDVQANQIKTVWVPGAVEIPLLAKRLAKSKHYQAIVCLGAVIRGETDHYNYVCQQVSFGCQQVALEYEVPIIFGVLTTTTKEQAFARAGGERGNKGADWADAAVSMIKLMKEIEITDE.

5-amino-6-(D-ribitylamino)uracil contacts are provided by residues phenylalanine 15, 49–51 (AVE), and 73–75 (AVI). 78 to 79 (ET) is a (2S)-2-hydroxy-3-oxobutyl phosphate binding site. Catalysis depends on histidine 81, which acts as the Proton donor. Phenylalanine 106 contributes to the 5-amino-6-(D-ribitylamino)uracil binding site. Residue arginine 120 participates in (2S)-2-hydroxy-3-oxobutyl phosphate binding.

It belongs to the DMRL synthase family. Forms an icosahedral capsid composed of 60 subunits, arranged as a dodecamer of pentamers.

The catalysed reaction is (2S)-2-hydroxy-3-oxobutyl phosphate + 5-amino-6-(D-ribitylamino)uracil = 6,7-dimethyl-8-(1-D-ribityl)lumazine + phosphate + 2 H2O + H(+). It functions in the pathway cofactor biosynthesis; riboflavin biosynthesis; riboflavin from 2-hydroxy-3-oxobutyl phosphate and 5-amino-6-(D-ribitylamino)uracil: step 1/2. Catalyzes the formation of 6,7-dimethyl-8-ribityllumazine by condensation of 5-amino-6-(D-ribitylamino)uracil with 3,4-dihydroxy-2-butanone 4-phosphate. This is the penultimate step in the biosynthesis of riboflavin. The sequence is that of 6,7-dimethyl-8-ribityllumazine synthase from Coxiella burnetii (strain Dugway 5J108-111).